The following is a 201-amino-acid chain: NADH-quinone oxidoreductase subunit C (201 aa).

This sequence belongs to the complex I 30 kDa subunit family. As to quaternary structure, NDH-1 is composed of 14 different subunits. Subunits NuoB, C, D, E, F, and G constitute the peripheral sector of the complex.

Its subcellular location is the cell inner membrane. The catalysed reaction is a quinone + NADH + 5 H(+)(in) = a quinol + NAD(+) + 4 H(+)(out). Its function is as follows. NDH-1 shuttles electrons from NADH, via FMN and iron-sulfur (Fe-S) centers, to quinones in the respiratory chain. The immediate electron acceptor for the enzyme in this species is believed to be ubiquinone. Couples the redox reaction to proton translocation (for every two electrons transferred, four hydrogen ions are translocated across the cytoplasmic membrane), and thus conserves the redox energy in a proton gradient. The sequence is that of NADH-quinone oxidoreductase subunit C from Aromatoleum aromaticum (strain DSM 19018 / LMG 30748 / EbN1) (Azoarcus sp. (strain EbN1)).